We begin with the raw amino-acid sequence, 388 residues long: Putative 8-amino-7-oxononanoate synthase (388 aa).

Position 23 (Arg-23) interacts with substrate. 110–111 (GY) serves as a coordination point for pyridoxal 5'-phosphate. Residue His-135 coordinates substrate. Residues Ser-182, 207-210 (DDAH), and 238-241 (TLSK) each bind pyridoxal 5'-phosphate. Position 241 is an N6-(pyridoxal phosphate)lysine (Lys-241). Thr-355 serves as a coordination point for substrate.

Belongs to the class-II pyridoxal-phosphate-dependent aminotransferase family. BioF subfamily. In terms of assembly, homodimer. Pyridoxal 5'-phosphate serves as cofactor.

It carries out the reaction 6-carboxyhexanoyl-[ACP] + L-alanine + H(+) = (8S)-8-amino-7-oxononanoate + holo-[ACP] + CO2. The protein operates within cofactor biosynthesis; biotin biosynthesis. Catalyzes the decarboxylative condensation of pimeloyl-[acyl-carrier protein] and L-alanine to produce 8-amino-7-oxononanoate (AON), [acyl-carrier protein], and carbon dioxide. In Thermodesulfovibrio yellowstonii (strain ATCC 51303 / DSM 11347 / YP87), this protein is Putative 8-amino-7-oxononanoate synthase (bioF).